The following is a 77-amino-acid chain: Defensin-like protein 159 (77 aa).

Positions 1 to 27 (MAKLSCSYFLVLILVFSAFLMVERAEG) are cleaved as a signal peptide. 4 cysteine pairs are disulfide-bonded: cysteine 30–cysteine 77, cysteine 40–cysteine 59, cysteine 45–cysteine 71, and cysteine 49–cysteine 73.

Belongs to the DEFL family.

The protein resides in the secreted. This chain is Defensin-like protein 159 (LCR25), found in Arabidopsis thaliana (Mouse-ear cress).